The following is a 203-amino-acid chain: Glycerol-3-phosphate acyltransferase (203 aa).

Helical transmembrane passes span 10–30 (LLAL…GLLI), 59–79 (PAAA…VILA), 87–107 (AAQI…YLKF), 116–136 (FFGT…AIWL), and 168–188 (LVVL…ENII).

Belongs to the PlsY family. In terms of assembly, probably interacts with PlsX.

It is found in the cell inner membrane. It catalyses the reaction an acyl phosphate + sn-glycerol 3-phosphate = a 1-acyl-sn-glycero-3-phosphate + phosphate. It functions in the pathway lipid metabolism; phospholipid metabolism. Functionally, catalyzes the transfer of an acyl group from acyl-phosphate (acyl-PO(4)) to glycerol-3-phosphate (G3P) to form lysophosphatidic acid (LPA). This enzyme utilizes acyl-phosphate as fatty acyl donor, but not acyl-CoA or acyl-ACP. The chain is Glycerol-3-phosphate acyltransferase from Dinoroseobacter shibae (strain DSM 16493 / NCIMB 14021 / DFL 12).